The chain runs to 211 residues: Peroxiredoxin (211 aa).

The 155-residue stretch at 2-156 (PLLGDDFPEL…ILRAVKVLQI (155 aa)) folds into the Thioredoxin domain. Cysteine 44 functions as the Cysteine sulfenic acid (-SOH) intermediate in the catalytic mechanism. Arginine 119 provides a ligand contact to substrate. The cysteines at positions 199 and 205 are disulfide-linked.

Belongs to the peroxiredoxin family. Prx6 subfamily. As to quaternary structure, homodecamer. Pentamer of dimers that assemble into a ring structure.

It is found in the cytoplasm. It catalyses the reaction a hydroperoxide + [thioredoxin]-dithiol = an alcohol + [thioredoxin]-disulfide + H2O. Its function is as follows. Thiol-specific peroxidase that catalyzes the reduction of hydrogen peroxide and organic hydroperoxides to water and alcohols, respectively. Plays a role in cell protection against oxidative stress by detoxifying peroxides. This chain is Peroxiredoxin, found in Chlorobaculum tepidum (strain ATCC 49652 / DSM 12025 / NBRC 103806 / TLS) (Chlorobium tepidum).